The following is a 182-amino-acid chain: Ribosome-recycling factor (182 aa).

Belongs to the RRF family.

It is found in the cytoplasm. Responsible for the release of ribosomes from messenger RNA at the termination of protein biosynthesis. May increase the efficiency of translation by recycling ribosomes from one round of translation to another. This Synechococcus sp. (strain CC9605) protein is Ribosome-recycling factor.